The sequence spans 146 residues: Protein SprT-like (146 aa).

Positions 4 to 142 constitute a SprT-like domain; that stretch reads NEYVKQVSLE…GRCKGKLRLL (139 aa). Zn(2+) is bound at residue His64. Glu65 is a catalytic residue. Residue His68 participates in Zn(2+) binding.

This sequence belongs to the SprT family. The cofactor is Zn(2+).

The protein localises to the cytoplasm. In Streptococcus gordonii (strain Challis / ATCC 35105 / BCRC 15272 / CH1 / DL1 / V288), this protein is Protein SprT-like.